Here is a 262-residue protein sequence, read N- to C-terminus: Indole-3-glycerol phosphate synthase (262 aa).

This sequence belongs to the TrpC family.

It catalyses the reaction 1-(2-carboxyphenylamino)-1-deoxy-D-ribulose 5-phosphate + H(+) = (1S,2R)-1-C-(indol-3-yl)glycerol 3-phosphate + CO2 + H2O. The protein operates within amino-acid biosynthesis; L-tryptophan biosynthesis; L-tryptophan from chorismate: step 4/5. In Bordetella petrii (strain ATCC BAA-461 / DSM 12804 / CCUG 43448), this protein is Indole-3-glycerol phosphate synthase.